Reading from the N-terminus, the 1739-residue chain is Gag-Pol polyprotein (1739 aa).

The N-myristoyl glycine; by host moiety is linked to residue G2. The span at 111–127 (PPSAPSLPPEPPFPTPP) shows a compositional bias: pro residues. The segment at 111–222 (PPSAPSLPPE…SQAFPLRQGG (112 aa)) is disordered. The PTAP/PSAP motif signature appears at 112–115 (PSAP). The LYPX(n)L motif signature appears at 131–135 (LYPAL). A PPXY motif motif is present at residues 163–166 (PPPY). S193 bears the Phosphoserine; by host mark. An interaction with host PIAS4 region spans residues 346 to 394 (GRSPTNLAKVKGITQGPNESPSAFLERLKEAYRRYTPYDPEDPGQETNV). The tract at residues 431–436 (IFNKRE) is interaction with host UBE2I. 2 stretches are compositionally biased toward basic and acidic residues: residues 435–467 (RETPEEREERIRRETEEKEERRRAEDEQREKER) and 487–500 (RQDRQGGERRRPQL). Disordered stretches follow at residues 435–500 (RETP…RPQL) and 514–553 (WARDCPKKPRGPRGPRPQASLLTLDDQGGQGQEPPPEPRI). Residues 439–479 (EEREERIRRETEEKEERRRAEDEQREKERDRRRHREMSKLL) adopt a coiled-coil conformation. Residues 503-520 (DQCAYCKEKGHWARDCPK) form a CCHC-type zinc finger. The 71-residue stretch at 562 to 632 (VTFLVDTGAQ…CPYPLLGRHL (71 aa)) folds into the Peptidase A2 domain. The active-site Protease; shared with dimeric partner is the D567. Positions 742-933 (LDQGILVPCQ…KQVKYLGYLL (192 aa)) constitute a Reverse transcriptase domain. D810, D884, D885, D1184, E1222, D1243, and D1313 together coordinate Mg(2+). The 147-residue stretch at 1175 to 1321 (PDADHTWYTD…ADQAAREVAT (147 aa)) folds into the RNase H type-1 domain. The HHCC-type zinc-finger motif lies at 1388–1428 (HQLTHLSFSKTKALLERSYSPSYMLNRDRTLKDITETCKAC). An Integrase catalytic domain is found at 1445–1603 (RGHRPGTHWE…TPYEILYGAP (159 aa)). Positions 1456 and 1515 each coordinate Mg(2+).

Belongs to the retroviral Pol polyprotein family. As to quaternary structure, homohexamer; further associates as homomultimer. The virus core is composed of a lattice formed from hexagonal rings, each containing six capsid monomers. In terms of assembly, interacts (via PPXY motif) with host NEDD4. Interacts (via PSAP motif) with host TSG101. Interacts (via LYPX(n)L motif) with host PDCD6IP. The reverse transcriptase is a monomer (Potential). Interacts (via RNase domains) with host release factor ETF1; this interaction is essential for translational readthrough of amber codon between viral gag and pol genes, as well as for viral replication. As to quaternary structure, homodimer. Mg(2+) serves as cofactor. Post-translationally, ubiquitinated by ITCH. Gag can recruit the ubiquitin ligase Itch in an L domain-independent manner to facilitate virus release via a mechanism that involves Gag ubiquitination. In terms of processing, specific enzymatic cleavages by the viral protease yield mature proteins. The protease is released by autocatalytic cleavage. The polyprotein is cleaved during and after budding, this process is termed maturation. Sumoylated; which is required for virus replication. Post-translationally, phosphorylated on serine residues.

The protein resides in the virion. It is found in the host cell membrane. Its subcellular location is the host late endosome membrane. It localises to the host endosome. The protein localises to the host multivesicular body. The protein resides in the host cytoplasm. The catalysed reaction is DNA(n) + a 2'-deoxyribonucleoside 5'-triphosphate = DNA(n+1) + diphosphate. The enzyme catalyses Endonucleolytic cleavage to 5'-phosphomonoester.. With respect to regulation, most efficiently inhibited by Amprenavir, which is able to block Gag-Pol processing in infected cells. Functionally, plays a role in budding and is processed by the viral protease during virion maturation outside the cell. During budding, it recruits, in a PPXY-dependent or independent manner, Nedd4-like ubiquitin ligases that conjugate ubiquitin molecules to Gag-Pol, or to Gag-Pol binding host factors. Interaction with HECT ubiquitin ligases probably links the viral protein to the host ESCRT pathway and facilitates release. In terms of biological role, targets Gag and gag-pol polyproteins to the plasma membrane via a multipartite membrane binding signal, that includes its myristoylated N-terminus. Also mediates nuclear localization of the pre-integration complex. Constituent of the pre-integration complex (PIC) which tethers the latter to mitotic chromosomes. This allows the integration of the viral genome into the host DNA. Its function is as follows. Forms the spherical core of the virion that encapsulates the genomic RNA-nucleocapsid complex. Functionally, involved in the packaging and encapsidation of two copies of the genome. Binds with high affinity to conserved UCUG elements within the packaging signal, located near the 5'-end of the genome. This binding is dependent on genome dimerization. Acts as a nucleic acid chaperone which is involved in rearrangement of nucleic acid secondary structures during gRNA retrotranscription. In terms of biological role, the aspartyl protease mediates proteolytic cleavages of Gag and Gag-Pol polyproteins during or shortly after the release of the virion from the plasma membrane. Cleavages take place as an ordered, step-wise cascade to yield mature proteins. This process is called maturation. Displays maximal activity during the budding process just prior to particle release from the cell (Potential). Cleaves the translation initiation factor eIF4G leading to the inhibition of host cap-dependent translation. RT is a multifunctional enzyme that converts the viral dimeric RNA genome into dsDNA in the cytoplasm, shortly after virus entry into the cell. This enzyme displays a DNA polymerase activity that can copy either DNA or RNA templates, and a ribonuclease H (RNase H) activity that cleaves the RNA strand of RNA-DNA heteroduplexes in a partially processive 3' to 5' endonucleasic mode. Conversion of viral genomic RNA into dsDNA requires many steps. A tRNA binds to the primer-binding site (PBS) situated at the 5' end of the viral RNA. RT uses the 3' end of the tRNA primer to perform a short round of RNA-dependent minus-strand DNA synthesis. The reading proceeds through the U5 region and ends after the repeated (R) region which is present at both ends of viral RNA. The portion of the RNA-DNA heteroduplex is digested by the RNase H, resulting in a ssDNA product attached to the tRNA primer. This ssDNA/tRNA hybridizes with the identical R region situated at the 3' end of viral RNA. This template exchange, known as minus-strand DNA strong stop transfer, can be either intra- or intermolecular. RT uses the 3' end of this newly synthesized short ssDNA to perform the RNA-dependent minus-strand DNA synthesis of the whole template. RNase H digests the RNA template except for a polypurine tract (PPT) situated at the 5' end of the genome. It is not clear if both polymerase and RNase H activities are simultaneous. RNase H probably can proceed both in a polymerase-dependent (RNA cut into small fragments by the same RT performing DNA synthesis) and a polymerase-independent mode (cleavage of remaining RNA fragments by free RTs). Secondly, RT performs DNA-directed plus-strand DNA synthesis using the PPT that has not been removed by RNase H as primers. PPT and tRNA primers are then removed by RNase H. The 3' and 5' ssDNA PBS regions hybridize to form a circular dsDNA intermediate. Strand displacement synthesis by RT to the PBS and PPT ends produces a blunt ended, linear dsDNA copy of the viral genome that includes long terminal repeats (LTRs) at both ends. Its function is as follows. Catalyzes viral DNA integration into the host chromosome, by performing a series of DNA cutting and joining reactions. This enzyme activity takes place after virion entry into a cell and reverse transcription of the RNA genome in dsDNA. The first step in the integration process is 3' processing. This step requires a complex comprising the viral genome, matrix protein and integrase. This complex is called the pre-integration complex (PIC). The integrase protein removes 2 nucleotides from each 3' end of the viral DNA, leaving recessed CA OH's at the 3' ends. In the second step that requires cell division, the PIC enters cell nucleus. In the third step, termed strand transfer, the integrase protein joins the previously processed 3' ends to the 5' ends of strands of target cellular DNA at the site of integration. The last step is viral DNA integration into host chromosome. The chain is Gag-Pol polyprotein (pol) from Mus musculus (Mouse).